We begin with the raw amino-acid sequence, 564 residues long: Excitatory amino acid transporter 4 (564 aa).

Over 1–55 (MSSHGNSLFLRESGQRLGRVGWLQRLQESLQQRALRTRLRLQTMTREHVLRFLRR) the chain is Cytoplasmic. Ser-2 bears the Phosphoserine mark. Transmembrane regions (helical) follow at residues 56 to 76 (NAFI…AFAL), 99 to 119 (MLQM…MASL), and 133 to 153 (VYYM…VTII). N-linked (GlcNAc...) asparagine glycans are attached at residues Asn-216, Asn-232, and Asn-239. Transmembrane regions (helical) follow at residues 262–285 (SANG…IGGV), 295–322 (FFDS…LFLI), and 344–365 (LTVI…YFLI). Positions 371-401 (FPFIGGVLQALITAMGTSSSSATLPITFRCL) form an intramembrane region, discontinuously helical. 388–390 (SSS) lines the L-aspartate pocket. Residues 411–437 (ITRFVLPVGATVNMDGTALYEALAAIF) form a helical membrane-spanning segment. 3 residues coordinate Na(+): Gly-419, Thr-421, and Asn-423. Residues Thr-427, 468–472 (IPQAG), Asp-501, and Asn-508 contribute to the L-aspartate site. The discontinuously helical intramembrane region spans 451-484 (ITTISITATAASVGAAGIPQAGLVTMVIVLTSVG). The chain crosses the membrane as a helical span at residues 498 to 519 (WFLDRLRTMTNVLGDSIGAAVI). Residues Asn-508 and Asp-512 each coordinate Na(+).

Belongs to the dicarboxylate/amino acid:cation symporter (DAACS) (TC 2.A.23) family. SLC1A6 subfamily. Homotrimer. Detected in brain, cerebellum and hippocampus.

Its subcellular location is the cell membrane. The catalysed reaction is K(+)(in) + L-glutamate(out) + 3 Na(+)(out) + H(+)(out) = K(+)(out) + L-glutamate(in) + 3 Na(+)(in) + H(+)(in). The enzyme catalyses K(+)(in) + L-aspartate(out) + 3 Na(+)(out) + H(+)(out) = K(+)(out) + L-aspartate(in) + 3 Na(+)(in) + H(+)(in). It catalyses the reaction D-aspartate(out) + K(+)(in) + 3 Na(+)(out) + H(+)(out) = D-aspartate(in) + K(+)(out) + 3 Na(+)(in) + H(+)(in). Sodium-dependent, high-affinity amino acid transporter that mediates the uptake of L-glutamate and also L-aspartate and D-aspartate. Functions as a symporter that transports one amino acid molecule together with two or three Na(+) ions and one proton, in parallel with the counter-transport of one K(+) ion. Mediates Cl(-) flux that is not coupled to amino acid transport; this avoids the accumulation of negative charges due to aspartate and Na(+) symport. Plays a redundant role in the rapid removal of released glutamate from the synaptic cleft, which is essential for terminating the postsynaptic action of glutamate. This is Excitatory amino acid transporter 4 (SLC1A6) from Canis lupus familiaris (Dog).